Here is a 425-residue protein sequence, read N- to C-terminus: F-box/LRR-repeat protein At3g59250 (425 aa).

One can recognise an F-box domain in the interval 6 to 54; it reads KDKISNLPEALICHILSFLPIEDSALTSVLSKRWRYLFAFRPNLVFDDS. LRR repeat units lie at residues 86–113, 138–163, 185–210, 264–293, and 294–319; these read DLQV…RIES, MLGK…VLNN, CTES…KYSD, CLSA…TIKT, and NQSV…VFEG.

This chain is F-box/LRR-repeat protein At3g59250, found in Arabidopsis thaliana (Mouse-ear cress).